The following is a 498-amino-acid chain: Cyclin-L1 (498 aa).

Cyclin-like regions lie at residues 68–169 and 182–266; these read ERIQ…RILK and KIIV…NTMK. Residues 294–498 form a disordered region; sequence LKARGQNPNG…SGHSHSRHRR (205 aa). The span at 311–320 shows a compositional bias: polar residues; it reads NGFSPASKPS. Basic and acidic residues predominate over residues 321 to 341; sequence SPRDVKMDDKSPNSKLKEPEN. An RS region spans residues 366–396; it reads KNHSRSRSRSTSRSPHRHRRSHSGTYSSHSS. Basic residues predominate over residues 367–387; that stretch reads NHSRSRSRSTSRSPHRHRRSH. The span at 388 to 402 shows a compositional bias: low complexity; that stretch reads SGTYSSHSSHSPSPR. A phosphoserine mark is found at S409 and S412. Residues 415-426 show a composition bias toward basic and acidic residues; it reads RTDRDRPSETSR. Over residues 427-440 the composition is skewed to basic residues; sequence HSNKRRRSRSRSRS. Basic and acidic residues predominate over residues 441 to 478; that stretch reads NSRERVRDRDHIKHKQERSGSGHHWDHRDRERDRSRDH. Over residues 479–498 the composition is skewed to basic residues; the sequence is GRNKRQSRSHSGHSHSRHRR.

It belongs to the cyclin family. Cyclin L subfamily.

The protein localises to the nucleus speckle. It localises to the nucleus. Its subcellular location is the nucleoplasm. Involved in pre-mRNA splicing. The sequence is that of Cyclin-L1 (ccnl1) from Danio rerio (Zebrafish).